The chain runs to 498 residues: ATP synthase subunit beta, chloroplastic (498 aa).

172-179 (GGAGVGKT) lines the ATP pocket.

It belongs to the ATPase alpha/beta chains family. As to quaternary structure, F-type ATPases have 2 components, CF(1) - the catalytic core - and CF(0) - the membrane proton channel. CF(1) has five subunits: alpha(3), beta(3), gamma(1), delta(1), epsilon(1). CF(0) has four main subunits: a(1), b(1), b'(1) and c(9-12).

It localises to the plastid. It is found in the chloroplast thylakoid membrane. The catalysed reaction is ATP + H2O + 4 H(+)(in) = ADP + phosphate + 5 H(+)(out). Its function is as follows. Produces ATP from ADP in the presence of a proton gradient across the membrane. The catalytic sites are hosted primarily by the beta subunits. The sequence is that of ATP synthase subunit beta, chloroplastic from Chamaerops humilis (Mediterranean fan palm).